The sequence spans 64 residues: MFNFDPTDQPTDQHLLQLPTDPHPLQQPIDPHPPPQPNNNLPFLNNHTIIYIYPNNQLTHIHNQ.

Residues 1–14 (MFNFDPTDQPTDQH) show a composition bias toward polar residues. The disordered stretch occupies residues 1 to 42 (MFNFDPTDQPTDQHLLQLPTDPHPLQQPIDPHPPPQPNNNLP).

This is an uncharacterized protein from Dictyostelium discoideum (Social amoeba).